Reading from the N-terminus, the 570-residue chain is Urease subunit alpha (570 aa).

Positions 131–570 (GGFDSHIHFI…LPLAQRYFMF (440 aa)) constitute a Urease domain. Residues histidine 136, histidine 138, and lysine 219 each contribute to the Ni(2+) site. The residue at position 219 (lysine 219) is an N6-carboxylysine. Histidine 221 serves as a coordination point for substrate. The Ni(2+) site is built by histidine 248 and histidine 274. Histidine 322 serves as the catalytic Proton donor. Aspartate 362 is a Ni(2+) binding site.

This sequence belongs to the metallo-dependent hydrolases superfamily. Urease alpha subunit family. Heterotrimer of UreA (gamma), UreB (beta) and UreC (alpha) subunits. Three heterotrimers associate to form the active enzyme. The cofactor is Ni cation. Post-translationally, carboxylation allows a single lysine to coordinate two nickel ions.

Its subcellular location is the cytoplasm. The catalysed reaction is urea + 2 H2O + H(+) = hydrogencarbonate + 2 NH4(+). It functions in the pathway nitrogen metabolism; urea degradation; CO(2) and NH(3) from urea (urease route): step 1/1. This Rhodopseudomonas palustris (strain ATCC BAA-98 / CGA009) protein is Urease subunit alpha.